The primary structure comprises 338 residues: N-acetyl-gamma-glutamyl-phosphate reductase (338 aa).

Cysteine 148 is a catalytic residue.

Belongs to the NAGSA dehydrogenase family. Type 1 subfamily.

Its subcellular location is the cytoplasm. The catalysed reaction is N-acetyl-L-glutamate 5-semialdehyde + phosphate + NADP(+) = N-acetyl-L-glutamyl 5-phosphate + NADPH + H(+). It participates in amino-acid biosynthesis; L-arginine biosynthesis; N(2)-acetyl-L-ornithine from L-glutamate: step 3/4. Its function is as follows. Catalyzes the NADPH-dependent reduction of N-acetyl-5-glutamyl phosphate to yield N-acetyl-L-glutamate 5-semialdehyde. This Leptospira interrogans serogroup Icterohaemorrhagiae serovar Lai (strain 56601) protein is N-acetyl-gamma-glutamyl-phosphate reductase.